The chain runs to 463 residues: Phosphomethylpyrimidine synthase (463 aa).

Residues asparagine 80, methionine 109, tyrosine 138, histidine 173, 193–195 (SRG), 234–237 (DGLR), and glutamate 273 each bind substrate. Histidine 277 contacts Zn(2+). Tyrosine 300 provides a ligand contact to substrate. Histidine 341 is a binding site for Zn(2+). [4Fe-4S] cluster-binding residues include cysteine 421, cysteine 424, and cysteine 429.

Belongs to the ThiC family. As to quaternary structure, homodimer. It depends on [4Fe-4S] cluster as a cofactor.

The catalysed reaction is 5-amino-1-(5-phospho-beta-D-ribosyl)imidazole + S-adenosyl-L-methionine = 4-amino-2-methyl-5-(phosphooxymethyl)pyrimidine + CO + 5'-deoxyadenosine + formate + L-methionine + 3 H(+). Its pathway is cofactor biosynthesis; thiamine diphosphate biosynthesis. Its function is as follows. Catalyzes the synthesis of the hydroxymethylpyrimidine phosphate (HMP-P) moiety of thiamine from aminoimidazole ribotide (AIR) in a radical S-adenosyl-L-methionine (SAM)-dependent reaction. In Anaeromyxobacter sp. (strain K), this protein is Phosphomethylpyrimidine synthase.